We begin with the raw amino-acid sequence, 178 residues long: Putative pre-16S rRNA nuclease (178 aa).

The span at 1-18 shows a compositional bias: basic and acidic residues; sequence MDHAEQGPDRPGVDDPGR. The segment at 1-21 is disordered; that stretch reads MDHAEQGPDRPGVDDPGRGRR.

Belongs to the YqgF nuclease family.

The protein localises to the cytoplasm. Its function is as follows. Could be a nuclease involved in processing of the 5'-end of pre-16S rRNA. The sequence is that of Putative pre-16S rRNA nuclease from Rhodococcus jostii (strain RHA1).